Here is a 578-residue protein sequence, read N- to C-terminus: Threonylcarbamoyladenosine tRNA methylthiotransferase (578 aa).

One can recognise an MTTase N-terminal domain in the interval 63 to 171 (QKIWIRTWGC…VVEVVEETIK (109 aa)). The [4Fe-4S] cluster site is built by cysteine 72 and cysteine 108. Phosphoserine is present on serine 121. Residues cysteine 137, cysteine 213, cysteine 217, and cysteine 220 each coordinate [4Fe-4S] cluster. One can recognise a Radical SAM core domain in the interval 199-430 (RKNPLIEIIS…RVFHSYNPYD (232 aa)). Residues 430 to 492 (DHKIGERQQV…KHFLKGQPVS (63 aa)) form the TRAM domain. A Phosphothreonine modification is found at threonine 498. Residues 553–570 (CALKVATGLALLALLLHF) traverse the membrane as a helical segment.

This sequence belongs to the methylthiotransferase family. CDKAL1 subfamily. The cofactor is [4Fe-4S] cluster. As to expression, expressed in pancreas, liver and skeletal muscle, especially in white muscle fibers.

The protein localises to the endoplasmic reticulum membrane. The catalysed reaction is N(6)-L-threonylcarbamoyladenosine(37) in tRNA + (sulfur carrier)-SH + AH2 + 2 S-adenosyl-L-methionine = 2-methylsulfanyl-N(6)-L-threonylcarbamoyladenosine(37) in tRNA + (sulfur carrier)-H + 5'-deoxyadenosine + L-methionine + A + S-adenosyl-L-homocysteine + 2 H(+). Functionally, catalyzes the methylthiolation of N6-threonylcarbamoyladenosine (t(6)A), leading to the formation of 2-methylthio-N6-threonylcarbamoyladenosine (ms(2)t(6)A) at position 37 in tRNAs that read codons beginning with adenine. This chain is Threonylcarbamoyladenosine tRNA methylthiotransferase (Cdkal1), found in Mus musculus (Mouse).